Reading from the N-terminus, the 335-residue chain is UDP-N-acetylenolpyruvoylglucosamine reductase 1 (335 aa).

Residues 36–202 (RIGGPAAVFA…LEVELLLKPG (167 aa)) form the FAD-binding PCMH-type domain. Arg181 is a catalytic residue. Residue Ser231 is the Proton donor of the active site. Glu306 is an active-site residue.

Belongs to the MurB family. The cofactor is FAD.

It localises to the cytoplasm. The enzyme catalyses UDP-N-acetyl-alpha-D-muramate + NADP(+) = UDP-N-acetyl-3-O-(1-carboxyvinyl)-alpha-D-glucosamine + NADPH + H(+). Its pathway is cell wall biogenesis; peptidoglycan biosynthesis. Cell wall formation. This Corynebacterium glutamicum (strain ATCC 13032 / DSM 20300 / JCM 1318 / BCRC 11384 / CCUG 27702 / LMG 3730 / NBRC 12168 / NCIMB 10025 / NRRL B-2784 / 534) protein is UDP-N-acetylenolpyruvoylglucosamine reductase 1 (murB1).